Consider the following 82-residue polypeptide: MTFPRAFTIIDDHGMVVSVFFWLLLIIILILFSIALLNVIKLCMVCCNLGKTIIVLPARHAYDAYKTFMQTKAYNPDEAFLV.

Residues 1–19 (MTFPRAFTIIDDHGMVVSV) lie on the Virion surface side of the membrane. Residues 20-40 (FFWLLLIIILILFSIALLNVI) form a helical membrane-spanning segment. Topologically, residues 41–82 (KLCMVCCNLGKTIIVLPARHAYDAYKTFMQTKAYNPDEAFLV) are intravirion.

The protein belongs to the alphacoronaviruses E protein family. As to quaternary structure, homopentamer. Interacts with membrane protein M in the budding compartment of the host cell, which is located between endoplasmic reticulum and the Golgi complex. Interacts with Nucleoprotein.

Its subcellular location is the host Golgi apparatus membrane. In terms of biological role, plays a central role in virus morphogenesis and assembly. Acts as a viroporin and self-assembles in host membranes forming pentameric protein-lipid pores that allow ion transport. Also plays a role in the induction of apoptosis. The sequence is that of Envelope small membrane protein from Feline coronavirus (strain FIPV WSU-79/1146) (FCoV).